The chain runs to 147 residues: MKVLLIKDVKALGKAGEVKEVKDGYGQNFLIAKGFAKAATNEVLKKYESDKKKEAENLRFEIANLEKLKEELSKITLEISKPVGANGSLFGGVTKDEIAHALKEQSHIEIDKKSLECDTFKSLGLHEVSVKLGHAIHAKFNINIKAE.

This sequence belongs to the bacterial ribosomal protein bL9 family.

In terms of biological role, binds to the 23S rRNA. The polypeptide is Large ribosomal subunit protein bL9 (Campylobacter jejuni subsp. jejuni serotype O:23/36 (strain 81-176)).